Here is a 170-residue protein sequence, read N- to C-terminus: Cytochrome b6-f complex subunit 4 (170 aa).

3 helical membrane passes run leucine 46–valine 66, leucine 105–glutamate 125, and threonine 141–leucine 161.

Belongs to the cytochrome b family. PetD subfamily. In terms of assembly, the 4 large subunits of the cytochrome b6-f complex are cytochrome b6, subunit IV (17 kDa polypeptide, PetD), cytochrome f and the Rieske protein, while the 4 small subunits are PetG, PetL, PetM and PetN. The complex functions as a dimer.

The protein localises to the cellular thylakoid membrane. Its function is as follows. Component of the cytochrome b6-f complex, which mediates electron transfer between photosystem II (PSII) and photosystem I (PSI), cyclic electron flow around PSI, and state transitions. The protein is Cytochrome b6-f complex subunit 4 of Synechococcus sp. (strain JA-2-3B'a(2-13)) (Cyanobacteria bacterium Yellowstone B-Prime).